The chain runs to 188 residues: Large ribosomal subunit protein bL32m (188 aa).

Zn(2+) contacts are provided by C110, C113, C123, and C126. The segment at 164–188 is disordered; sequence TPSEQDQGKRIIERDRKRPSWFTQN. The segment covering 169–181 has biased composition (basic and acidic residues); that stretch reads DQGKRIIERDRKR.

Belongs to the bacterial ribosomal protein bL32 family. Component of the mitochondrial large ribosomal subunit (mt-LSU). Mature mammalian 55S mitochondrial ribosomes consist of a small (28S) and a large (39S) subunit. The 28S small subunit contains a 12S ribosomal RNA (12S mt-rRNA) and 30 different proteins. The 39S large subunit contains a 16S rRNA (16S mt-rRNA), a copy of mitochondrial valine transfer RNA (mt-tRNA(Val)), which plays an integral structural role, and 52 different proteins. bL32m has a zinc binding site. In terms of processing, MRPL32 precursor is processed by the m-AAA protease (composed of AFG3L2 and SPG7), which cleaves the N-terminal transit peptide. Cleavage by the m-AAA protease takes place prior to assembly into the large subunit, an essential step for mitochondrial ribosome (mitoribosome) assembly. Proper processing by the m-AAA protease is dependent on the zinc-binding region within the tightly folded C-terminal domain of MRPL32: zinc-dependent folding halts degradation initiated from the N-terminus and triggers the release of mature MRPL32.

It localises to the mitochondrion. Functionally, component of the mitochondrial large ribosomal subunit (mt-LSU). The mitochondrial ribosome (mitoribosome) is a large ribonucleoprotein complex responsible for the synthesis of proteins inside mitochondria. The sequence is that of Large ribosomal subunit protein bL32m (MRPL32) from Homo sapiens (Human).